Consider the following 204-residue polypeptide: LexA repressor (204 aa).

A DNA-binding region (H-T-H motif) is located at residues Val31–Ser51. Catalysis depends on for autocatalytic cleavage activity residues Ser128 and Lys165.

This sequence belongs to the peptidase S24 family. Homodimer.

It catalyses the reaction Hydrolysis of Ala-|-Gly bond in repressor LexA.. Represses a number of genes involved in the response to DNA damage (SOS response), including recA and lexA. In the presence of single-stranded DNA, RecA interacts with LexA causing an autocatalytic cleavage which disrupts the DNA-binding part of LexA, leading to derepression of the SOS regulon and eventually DNA repair. The sequence is that of LexA repressor from Clostridium acetobutylicum (strain ATCC 824 / DSM 792 / JCM 1419 / IAM 19013 / LMG 5710 / NBRC 13948 / NRRL B-527 / VKM B-1787 / 2291 / W).